Reading from the N-terminus, the 395-residue chain is 1-deoxy-D-xylulose 5-phosphate reductoisomerase (395 aa).

Residues threonine 15, glycine 16, serine 17, isoleucine 18, glycine 41, asparagine 43, and asparagine 126 each contribute to the NADPH site. Lysine 127 lines the 1-deoxy-D-xylulose 5-phosphate pocket. Glutamate 128 lines the NADPH pocket. Aspartate 152 lines the Mn(2+) pocket. 1-deoxy-D-xylulose 5-phosphate-binding residues include serine 153, glutamate 154, serine 178, and histidine 201. Glutamate 154 lines the Mn(2+) pocket. Glycine 207 lines the NADPH pocket. Residues serine 214, asparagine 219, lysine 220, and glutamate 223 each coordinate 1-deoxy-D-xylulose 5-phosphate. Glutamate 223 contacts Mn(2+).

This sequence belongs to the DXR family. Requires Mg(2+) as cofactor. The cofactor is Mn(2+).

The catalysed reaction is 2-C-methyl-D-erythritol 4-phosphate + NADP(+) = 1-deoxy-D-xylulose 5-phosphate + NADPH + H(+). Its pathway is isoprenoid biosynthesis; isopentenyl diphosphate biosynthesis via DXP pathway; isopentenyl diphosphate from 1-deoxy-D-xylulose 5-phosphate: step 1/6. Its function is as follows. Catalyzes the NADPH-dependent rearrangement and reduction of 1-deoxy-D-xylulose-5-phosphate (DXP) to 2-C-methyl-D-erythritol 4-phosphate (MEP). In Ruegeria pomeroyi (strain ATCC 700808 / DSM 15171 / DSS-3) (Silicibacter pomeroyi), this protein is 1-deoxy-D-xylulose 5-phosphate reductoisomerase.